The primary structure comprises 64 residues: Putative neurotoxin 6 (64 aa).

Positions 1-24 (MKNKFAALVITLFVLVLAIDNVTT) are cleaved as a signal peptide.

Belongs to the scolopendra neurotoxin 6 family. In terms of processing, contains 3 disulfide bonds. Expressed by the venom gland.

It is found in the secreted. This chain is Putative neurotoxin 6, found in Scolopendra mutilans (Chinese red-headed centipede).